The primary structure comprises 273 residues: MGKAALQDPHGGIWYFAYGSNLRLSVLENRGIKALDIKAVIVPSHYLTFDIFGIPYAEPSFASVAPFAREKKTTLRLGDSPASRDVPPVQGLAYLLNPRDYRQLVISEGGGVAYDEVEVHASILDKDGKPDPGATLIARTLQAKYPWRPNGAPSARYLGLISTGCKQNEPLTAYSDYIDSLPAYEPPTSLHAKVGGLLFLMFWRPPLRLLIRLIRVNTDQDGHCPQWLGWIILTLYGLMWSYHDNIHSKIWGRGDGRKLHFEETPAKEVPVRH.

The helical transmembrane segment at 227–243 (WLGWIILTLYGLMWSYH) threads the bilayer.

The protein belongs to the class-I pyridoxal-phosphate-dependent aminotransferase family.

The protein localises to the membrane. It catalyses the reaction an alpha-(gamma-L-glutamyl)-L-amino acid = 5-oxo-L-proline + an L-alpha-amino acid. It participates in mycotoxin biosynthesis. In terms of biological role, gamma-glutamyl cyclotransferase-like protein; part of the gene cluster that mediates the biosynthesis of gliotoxin, a member of the epipolythiodioxopiperazine (ETP) class of toxins characterized by a disulfide bridged cyclic dipeptide. The first step in gliotoxin biosynthesis is the condensation of serine and phenylalanine to form the cyclo-L-phenylalanyl-L-serine diketopiperazine (DKP) by the NRPS gliP. GliP is also able to produce the DKP cyclo-L-tryptophanyl-L-serine, suggesting that the substrate specificity of the first adenylation (A) domain in gliP is sufficiently relaxed to accommodate both L-Phe and L-Trp. The cytochrome P450 monooxygenase gliC has been shown to catalyze the subsequent hydroxylation of the alpha-carbon of L-Phe in cyclo-L-phenylalanyl-L-serine whereas the second cytochrome P450 enzyme, gliF, is presumably involved in the modification of the DKP side chain. The glutathione S-transferase (GST) gliG then forms a bis-glutathionylated biosynthetic intermediate which is responsible for the sulfurization of gliotoxin. This bis-glutathionylated intermediate is subsequently processed by the gamma-glutamyl cyclotransferase gliK to remove both gamma-glutamyl moieties. Subsequent processing via gliI yields a biosynthetic intermediate, which is N-methylated via the N-methyltransferase gliN, before the gliotoxin oxidoreductase gliT-mediated disulfide bridge closure. GliN-mediated amide methylation confers stability to ETP, damping the spontaneous formation of tri- and tetrasulfides. Intracellular dithiol gliotoxin oxidized by gliT is subsequently effluxed by gliA. Gliotoxin contributes to pathogenesis during invasive aspergillosis. In macrophages and neutrophils, gliotoxin showed inhibition of various different cell functions including cytokine production, antigen presentation, phagocytosis, and production of reactive oxygen species. This is Gamma-glutamyl cyclotransferase gliK from Aspergillus fumigatus (strain ATCC MYA-4609 / CBS 101355 / FGSC A1100 / Af293) (Neosartorya fumigata).